The chain runs to 110 residues: Iron-sulfur cluster assembly protein CyaY (110 aa).

This sequence belongs to the frataxin family.

Functionally, involved in iron-sulfur (Fe-S) cluster assembly. May act as a regulator of Fe-S biogenesis. The polypeptide is Iron-sulfur cluster assembly protein CyaY (Azotobacter vinelandii (strain DJ / ATCC BAA-1303)).